The primary structure comprises 179 residues: Large ribosomal subunit protein uL5 (179 aa).

This sequence belongs to the universal ribosomal protein uL5 family. In terms of assembly, part of the 50S ribosomal subunit; part of the 5S rRNA/L5/L18/L25 subcomplex. Contacts the 5S rRNA and the P site tRNA. Forms a bridge to the 30S subunit in the 70S ribosome.

This is one of the proteins that bind and probably mediate the attachment of the 5S RNA into the large ribosomal subunit, where it forms part of the central protuberance. In the 70S ribosome it contacts protein S13 of the 30S subunit (bridge B1b), connecting the 2 subunits; this bridge is implicated in subunit movement. Contacts the P site tRNA; the 5S rRNA and some of its associated proteins might help stabilize positioning of ribosome-bound tRNAs. The polypeptide is Large ribosomal subunit protein uL5 (Bacillus cereus (strain G9842)).